A 293-amino-acid chain; its full sequence is Small ribosomal subunit protein uS2m (293 aa).

Residues 21–38 (GRAAQRGRTLGSAAAAAA) are compositionally biased toward low complexity. Disordered stretches follow at residues 21–49 (GRAAQRGRTLGSAAAAAAREPERDSDRSA) and 263–293 (QGAPGPHPANPAAPGAPSPGAQAQLGMGHSP). Over residues 39–49 (REPERDSDRSA) the composition is skewed to basic and acidic residues. The segment covering 267 to 279 (GPHPANPAAPGAP) has biased composition (pro residues).

The protein belongs to the universal ribosomal protein uS2 family. In terms of assembly, component of the mitochondrial ribosome small subunit (28S) which comprises a 12S rRNA and about 30 distinct proteins.

It localises to the mitochondrion. Functionally, required for mitoribosome formation and stability, and mitochondrial translation. This Bos taurus (Bovine) protein is Small ribosomal subunit protein uS2m (MRPS2).